A 130-amino-acid chain; its full sequence is Small ribosomal subunit protein uS11 (130 aa).

This sequence belongs to the universal ribosomal protein uS11 family. As to quaternary structure, part of the 30S ribosomal subunit.

Located on the platform of the 30S subunit. The protein is Small ribosomal subunit protein uS11 of Thermoplasma acidophilum (strain ATCC 25905 / DSM 1728 / JCM 9062 / NBRC 15155 / AMRC-C165).